The sequence spans 237 residues: Trypsin-1 (237 aa).

Residues 1-237 (IVGGTDAVLG…HVDWIKANAV (237 aa)) form the Peptidase S1 domain. Cys30 and Cys46 are disulfide-bonded. His45 functions as the Charge relay system in the catalytic mechanism. 3 residues coordinate Ca(2+): Glu64, Val69, and Glu74. The Charge relay system role is filled by Asp96. 2 disulfide bridges follow: Cys159-Cys174 and Cys185-Cys213. Catalysis depends on Ser189, which acts as the Charge relay system.

This sequence belongs to the peptidase S1 family. The cofactor is Ca(2+).

The protein localises to the secreted. It localises to the extracellular space. The enzyme catalyses Preferential cleavage: Arg-|-Xaa, Lys-|-Xaa.. In Astacus astacus (Noble crayfish), this protein is Trypsin-1.